Here is a 92-residue protein sequence, read N- to C-terminus: Small ribosomal subunit protein uS19c (92 aa).

It belongs to the universal ribosomal protein uS19 family.

The protein localises to the plastid. The protein resides in the chloroplast. Its function is as follows. Protein S19 forms a complex with S13 that binds strongly to the 16S ribosomal RNA. The chain is Small ribosomal subunit protein uS19c from Pyropia yezoensis (Susabi-nori).